A 175-amino-acid chain; its full sequence is MGKITFYEDRAFQGRSYECTTDCPNLQPYFSRCNSIRVESGCWMIYERPNCQGHQYFLRRGEYPNYQQWMGLSDSIRSCHLIPPHSGTYRMKIYERDELRGQMSELTDDCLSVQDRFHLTEIHSLNVLEGSWILYEMPNYRGRQYLLRPGEYRRFLDWGAPNAKVGSLRRVMDLY.

Beta/gamma crystallin 'Greek key' domains follow at residues 2 to 40 (GKIT…RVES) and 41 to 83 (GCWM…HLIP). Positions 84–88 (PHSGT) are connecting peptide. Beta/gamma crystallin 'Greek key' domains lie at 89–129 (YRMK…NVLE) and 130–172 (GSWI…RRVM).

It belongs to the beta/gamma-crystallin family. As to quaternary structure, monomer.

Functionally, crystallins are the dominant structural components of the vertebrate eye lens. The sequence is that of Gamma-crystallin B (CRYGB) from Macaca mulatta (Rhesus macaque).